Consider the following 66-residue polypeptide: KEGYLVELGTGCKYECFKLGDNDYCLRECKAKYGKGAGGYCYAFGCWCTHLYEQAVVWPLKNKTCK.

The region spanning 1-66 (KEGYLVELGT…VWPLKNKTCK (66 aa)) is the LCN-type CS-alpha/beta domain. 4 disulfide bridges follow: C12–C65, C16–C41, C25–C46, and C29–C48.

It belongs to the long (4 C-C) scorpion toxin superfamily. Sodium channel inhibitor family. Beta subfamily. Expressed by the venom gland.

Its subcellular location is the secreted. Its function is as follows. Beta toxins bind voltage-independently at site-4 of sodium channels (Nav) and shift the voltage of activation toward more negative potentials thereby affecting sodium channel activation and promoting spontaneous and repetitive firing. Acts on human sodium channel Nav1.6/SCN8A. Also able to weakly shift the activation curves of human Nav1.2/SCN2A and Nav1.4/SCN4A. This chain is Beta-toxin Chui4, found in Centruroides huichol (Scorpion).